Reading from the N-terminus, the 492-residue chain is Proline--tRNA ligase (492 aa).

The protein belongs to the class-II aminoacyl-tRNA synthetase family. ProS type 3 subfamily. In terms of assembly, homodimer.

Its subcellular location is the cytoplasm. The catalysed reaction is tRNA(Pro) + L-proline + ATP = L-prolyl-tRNA(Pro) + AMP + diphosphate. In terms of biological role, catalyzes the attachment of proline to tRNA(Pro) in a two-step reaction: proline is first activated by ATP to form Pro-AMP and then transferred to the acceptor end of tRNA(Pro). The protein is Proline--tRNA ligase of Flavobacterium psychrophilum (strain ATCC 49511 / DSM 21280 / CIP 103535 / JIP02/86).